The chain runs to 236 residues: CD81 antigen (236 aa).

Residues 1–12 (MGVEGCTKCIKY) are Cytoplasmic-facing. The chain crosses the membrane as a helical span at residues 13-33 (LLFVFNFVFWLAGGVILGVAL). The Extracellular portion of the chain corresponds to 34–63 (WLRHDPQTTNLLYLELGDKPAPNTFYVGIY). The chain crosses the membrane as a helical span at residues 64 to 84 (ILIAVGAVMMFVGFLGCYGAI). The Cytoplasmic segment spans residues 85 to 89 (QESQC). A helical membrane pass occupies residues 90 to 112 (LLGTFFTCLVILFACEVAAGIWG). The Extracellular portion of the chain corresponds to 113 to 201 (FVNKDQIAKD…QKIDELFSGK (89 aa)). 2 cysteine pairs are disulfide-bonded: C156-C190 and C157-C175. The chain crosses the membrane as a helical span at residues 202–224 (LYLIGIAAIVVAVIMIFEMILSM). Residue E219 participates in cholesterol binding. Residues 225 to 236 (VLCCGIRNSSVY) lie on the Cytoplasmic side of the membrane.

The protein belongs to the tetraspanin (TM4SF) family. As to quaternary structure, homodimer. Part of a complex composed of CD19, CR2/CD21, CD81 and IFITM1/CD225 in the membrane of mature B cells. Interacts (via the second extracellular domain) with CD19; this interaction is initiated early during biosynthesis in the ER and enables trafficking of only properly folded CD19. Part of a complex that includes MHC class II/HLA-DR molecules and IFITM1. Interacts with IFITM1. Interacts with IFITM2 and IFITM3. Part of integrin-tetraspanin complex composed of CD9, CD81, beta-1 and beta-2 integrins in the membrane of monocyte/macrophages. Interacts (via the second extracellular domain) with integrin ITGAV:ITGB3. Interacts with CD247/CD3 zeta, ICAM1 and CD9 at the immune synapse on T cell membrane. Part of a GPCR-tetraspanin complex consisting at least of ADGRG1, CD81, possibly CD9, and GNA11 in which CD81 enhances the association of ADGRG1 with GNA11. Part of a complex composed of CD9, CD81, PTGFRN and IGSF8. Interacts directly with IGSF8. Interacts with CD53 and SCIMP. Interacts with SAMHD1 (via its C-terminus). Interacts with glypican GPC3 and with the transcriptional repressor HHEX; binding to GPC3 decreases the availability of free CD81 for binding to HHEX, resulting in nuclear translocation of HHEX and transcriptional repression. Interacts with CLDN1. Interacts with CLDN6 and CLDN9. Post-translationally, not glycosylated. Likely constitutively palmitoylated at low levels. Protein palmitoylation is up-regulated upon coligation of BCR and CD9-C2R-CD81 complexes in lipid rafts.

The protein localises to the cell membrane. It localises to the basolateral cell membrane. Its function is as follows. Structural component of specialized membrane microdomains known as tetraspanin-enriched microdomains (TERMs), which act as platforms for receptor clustering and signaling. Essential for trafficking and compartmentalization of CD19 receptor on the surface of activated B cells. Upon initial encounter with microbial pathogens, enables the assembly of CD19-CR2/CD21 and B cell receptor (BCR) complexes at signaling TERMs, lowering the threshold dose of antigen required to trigger B cell clonal expansion and antibody production. In T cells, facilitates the localization of CD247/CD3 zeta at antigen-induced synapses with B cells, providing for costimulation and polarization toward T helper type 2 phenotype. Present in MHC class II compartments, may also play a role in antigen presentation. Can act both as positive and negative regulator of homotypic or heterotypic cell-cell fusion processes. Positively regulates sperm-egg fusion and may be involved in acrosome reaction. In myoblasts, associates with CD9 and PTGFRN and inhibits myotube fusion during muscle regeneration. In macrophages, associates with CD9 and beta-1 and beta-2 integrins, and prevents macrophage fusion into multinucleated giant cells specialized in ingesting complement-opsonized large particles. Also prevents the fusion of mononuclear cell progenitors into osteoclasts in charge of bone resorption. May regulate the compartmentalization of enzymatic activities. In T cells, defines the subcellular localization of dNTPase SAMHD1 and permits its degradation by the proteasome, thereby controlling intracellular dNTP levels. Also involved in cell adhesion and motility. Positively regulates integrin-mediated adhesion of macrophages, particularly relevant for the inflammatory response in the lung. This Chlorocebus aethiops (Green monkey) protein is CD81 antigen (CD81).